Consider the following 120-residue polypeptide: Glutamate--tRNA ligase (120 aa).

This sequence belongs to the class-I aminoacyl-tRNA synthetase family. Glutamate--tRNA ligase type 1 subfamily. In terms of assembly, monomer.

The protein resides in the cytoplasm. The enzyme catalyses tRNA(Glu) + L-glutamate + ATP = L-glutamyl-tRNA(Glu) + AMP + diphosphate. In terms of biological role, catalyzes the attachment of glutamate to tRNA(Glu) in a two-step reaction: glutamate is first activated by ATP to form Glu-AMP and then transferred to the acceptor end of tRNA(Glu). This Staphylococcus xylosus protein is Glutamate--tRNA ligase (gltX).